The chain runs to 664 residues: 1,4-alpha-glucan branching enzyme GlgB 2 (664 aa).

A compositionally biased stretch (basic and acidic residues) spans 1 to 17; the sequence is MGGKEMRNCKELKHEKN. Positions 1–31 are disordered; the sequence is MGGKEMRNCKELKHEKNGNVTEKVGKNKGKS. Asp342 acts as the Nucleophile in catalysis. Glu395 (proton donor) is an active-site residue.

The protein belongs to the glycosyl hydrolase 13 family. GlgB subfamily. As to quaternary structure, monomer.

It carries out the reaction Transfers a segment of a (1-&gt;4)-alpha-D-glucan chain to a primary hydroxy group in a similar glucan chain.. It functions in the pathway glycan biosynthesis; glycogen biosynthesis. Its function is as follows. Catalyzes the formation of the alpha-1,6-glucosidic linkages in glycogen by scission of a 1,4-alpha-linked oligosaccharide from growing alpha-1,4-glucan chains and the subsequent attachment of the oligosaccharide to the alpha-1,6 position. The chain is 1,4-alpha-glucan branching enzyme GlgB 2 (glgB2) from Clostridium perfringens (strain 13 / Type A).